The primary structure comprises 269 residues: Carbohydrate metabolism regulator TYE7 (269 aa).

A disordered region spans residues 146-178; sequence QPKIKQEPGTKAATKPKRRAPRKKLTESQKKAH. The span at 159 to 168 shows a compositional bias: basic residues; the sequence is TKPKRRAPRK. The span at 169–178 shows a compositional bias: basic and acidic residues; that stretch reads KLTESQKKAH. Positions 173 to 244 constitute a bHLH domain; sequence SQKKAHNKIE…EKATEYILHL (72 aa).

In terms of assembly, efficient DNA binding requires dimerization with another bHLH protein.

It is found in the nucleus. In terms of biological role, key transcriptional regulator of carbohydrate metabolism. Binds the promoter sequences of the glycolytic genes at the CANNTG motif and activates their expression during growth on either fermentable or non-fermentable carbon sources as well as under hypoxic growth conditions. Complete glycolytic activation by GAL4 and TYE7 is required for full virulence. Involved in biofilm formation and negatively regulates hyphal formation under hypoxia. Also controls the expression of the copper transport protein CTR1. In Candida albicans (strain SC5314 / ATCC MYA-2876) (Yeast), this protein is Carbohydrate metabolism regulator TYE7 (TYE7).